The chain runs to 173 residues: Protein PLASTID REDOX INSENSITIVE 2, chloroplastic (173 aa).

Residues 1–55 constitute a chloroplast transit peptide; that stretch reads MATRAWVAAAVALNPQLLPLRSCSPTKSVSPAQRSASMGLRLRSGRPCLGKFVCR.

Its subcellular location is the plastid. The protein resides in the chloroplast stroma. It localises to the chloroplast nucleoid. Required for the activity of the plastid-encoded RNA polymerase (PEP) and full expression of genes transcribed by PEP. The polypeptide is Protein PLASTID REDOX INSENSITIVE 2, chloroplastic (Zea mays (Maize)).